A 676-amino-acid polypeptide reads, in one-letter code: Solute carrier family 26 member 10 (676 aa).

The segment at 1-24 (MSGPLASGTCSDPEEVSDLKSPLS) is disordered. A run of 11 helical transmembrane segments spans residues 101–121 (AVAG…FALL), 124–144 (VPPV…SLLG), 149–165 (LSTG…GSVV), 190–210 (VGAA…MFVL), 226–246 (ALTS…LLGL), 267–287 (ALSQ…VLLV), 300–320 (LLTP…LCFT), 353–373 (ILAD…SLAS), 398–418 (ISSL…SLLV), 426–446 (LAGL…RPFF), and 487–507 (IVTW…VGVV). An STAS domain is found at 539 to 660 (ESRKLLQVPG…VSVQDAAAHA (122 aa)).

It belongs to the SLC26A/SulP transporter (TC 2.A.53) family.

Its subcellular location is the membrane. Its function is as follows. Chloride/bicarbonate exchanger. The polypeptide is Solute carrier family 26 member 10 (Slc26a10) (Mus musculus (Mouse)).